The following is a 121-amino-acid chain: Large ribosomal subunit protein bL12 (121 aa).

The protein belongs to the bacterial ribosomal protein bL12 family. As to quaternary structure, homodimer. Part of the ribosomal stalk of the 50S ribosomal subunit. Forms a multimeric L10(L12)X complex, where L10 forms an elongated spine to which 2 to 4 L12 dimers bind in a sequential fashion. Binds GTP-bound translation factors.

Functionally, forms part of the ribosomal stalk which helps the ribosome interact with GTP-bound translation factors. Is thus essential for accurate translation. The chain is Large ribosomal subunit protein bL12 from Shigella sonnei (strain Ss046).